Reading from the N-terminus, the 554-residue chain is Arginine--tRNA ligase (554 aa).

The 'HIGH' region motif lies at 129-139 (ANPTGPLHIGH).

Belongs to the class-I aminoacyl-tRNA synthetase family. Monomer.

Its subcellular location is the cytoplasm. The catalysed reaction is tRNA(Arg) + L-arginine + ATP = L-arginyl-tRNA(Arg) + AMP + diphosphate. The polypeptide is Arginine--tRNA ligase (Syntrophotalea carbinolica (strain DSM 2380 / NBRC 103641 / GraBd1) (Pelobacter carbinolicus)).